We begin with the raw amino-acid sequence, 231 residues long: Probable amino-acid ABC transporter permease protein y4tG (231 aa).

The next 6 membrane-spanning stretches (helical) occupy residues 9–29 (TGNG…MGLI), 32–52 (LQAA…FAVL), 64–84 (AAVL…FFLY), 86–106 (VLPE…ALGI), 161–181 (YLVS…VEML), and 196–216 (VPLS…SALV). The ABC transmembrane type-1 domain occupies 28-217 (LITTLQAAFL…LTIVASALVR (190 aa)).

The protein belongs to the binding-protein-dependent transport system permease family. HisMQ subfamily.

The protein resides in the cell inner membrane. Functionally, probably part of the binding-protein-dependent transport system y4tEFGH for an amino acid. Probably responsible for the translocation of the substrate across the membrane. This Sinorhizobium fredii (strain NBRC 101917 / NGR234) protein is Probable amino-acid ABC transporter permease protein y4tG.